The following is a 549-amino-acid chain: Protein wntless homolog (549 aa).

The N-terminal stretch at 1–34 (MAGGAVIENLSNRKLFVIFAGLLVIQIMFFLIGA) is a signal peptide. Residues 36 to 236 (YAPSPSSYME…RLIEIHQNGG (201 aa)) lie on the Lumenal side of the membrane. The helical transmembrane segment at 237 to 257 (FTLVWLWTKTFMTPVVAICLW) threads the bilayer. The Cytoplasmic portion of the chain corresponds to 258–275 (WYYNRINQLARNPLLLER). Residues 276–296 (AILLLGLSLVILDFPIEWISL) traverse the membrane as a helical segment. The Lumenal portion of the chain corresponds to 297 to 310 (TYRIPFLLLISDLR). The helical transmembrane segment at 311–331 (QGLFYTVLFSFWLIFAGEHLI) threads the bilayer. Topologically, residues 332–345 (DDNTRNNLKSYRFN) are cytoplasmic. The helical transmembrane segment at 346–366 (LSFIITASLGLLIYDLIERGI) threads the bilayer. The Lumenal segment spans residues 367 to 383 (QLYDPFYSVWSSPTGSQ). The helical transmembrane segment at 384–404 (IAYFAIFISAISTVAYFIFLF) threads the bilayer. At 405–439 (FKIARVWSTIKSKRSAQIYQTSENRRLKVEGVIYR) the chain is on the cytoplasmic side. The helical transmembrane segment at 440–460 (FKFLMLFTLLCSAFTIAAYFM) threads the bilayer. Residues 461–483 (KQYGEAQLHGDEARDGFLTGSTS) are Lumenal-facing. Residues 484-504 (AFFTGAFGMCNIYVLLLLAMY) form a helical membrane-spanning segment. Residues 505-549 (APSHKHYRGASQLIDENDDDEIMEDPSNQHTESNAMTTFLKPSTD) lie on the Cytoplasmic side of the membrane. Residues 524–549 (DEIMEDPSNQHTESNAMTTFLKPSTD) are disordered. Over residues 530–549 (PSNQHTESNAMTTFLKPSTD) the composition is skewed to polar residues.

This sequence belongs to the wntless family. As to expression, expressed in the tail hypodermis, stomatointestinal muscle, the mesoblast cell M and its descendants, CAN neurons, the developing vulva, the pharynx and the pharyngeal intestinal valve.

Its subcellular location is the cell membrane. The protein resides in the early endosome membrane. It localises to the golgi apparatus membrane. It is found in the basal cell membrane. The protein localises to the late endosome membrane. Functionally, probable sorting receptor which regulates endocytosis and secretion of the wnt ligand egl-20. Recycling of mig-14 from the plasma membrane to the Golgi apparatus by the retromer complex is essential for its function. Its endosomal trafficking is regulated by its association with sorting nexin snx-3 on early endosomes and the mtm-6/mtm-9 myotubularin complex. Required in embryonic development for endoderm specification and the correct positioning and orientation of the mitotic spindles and division planes in blastomere cells. Functions during vulval development, playing a role in vulval precursor cell fate specification. During development, specifically regulates the migration of HSN neurons, the left Q neuroblast (QL) and its descendants and the distal tip cells of the gonads. Positioning of Q neuroblasts may be both dependent and independent of hox gene mab-5. Involved in establishing ALM and PLM neuronal cell polarity. The sequence is that of Protein wntless homolog from Caenorhabditis elegans.